The primary structure comprises 414 residues: Imidazolonepropionase (414 aa).

Residues H95 and H97 each coordinate Fe(3+). Zn(2+) contacts are provided by H95 and H97. Residues R104, Y162, and H189 each coordinate 4-imidazolone-5-propanoate. Y162 contributes to the N-formimidoyl-L-glutamate binding site. H252 serves as a coordination point for Fe(3+). Zn(2+) is bound at residue H252. Residue Q255 coordinates 4-imidazolone-5-propanoate. Residue D326 participates in Fe(3+) binding. D326 is a Zn(2+) binding site. N-formimidoyl-L-glutamate contacts are provided by N328 and G330. Residue S331 coordinates 4-imidazolone-5-propanoate.

The protein belongs to the metallo-dependent hydrolases superfamily. HutI family. The cofactor is Zn(2+). Fe(3+) serves as cofactor.

Its subcellular location is the cytoplasm. It carries out the reaction 4-imidazolone-5-propanoate + H2O = N-formimidoyl-L-glutamate. The protein operates within amino-acid degradation; L-histidine degradation into L-glutamate; N-formimidoyl-L-glutamate from L-histidine: step 3/3. Functionally, catalyzes the hydrolytic cleavage of the carbon-nitrogen bond in imidazolone-5-propanoate to yield N-formimidoyl-L-glutamate. It is the third step in the universal histidine degradation pathway. This chain is Imidazolonepropionase, found in Streptomyces avermitilis (strain ATCC 31267 / DSM 46492 / JCM 5070 / NBRC 14893 / NCIMB 12804 / NRRL 8165 / MA-4680).